The chain runs to 155 residues: Ribosomal RNA large subunit methyltransferase H (155 aa).

S-adenosyl-L-methionine contacts are provided by Leu72 and Gly104.

The protein belongs to the RNA methyltransferase RlmH family. In terms of assembly, homodimer.

Its subcellular location is the cytoplasm. The enzyme catalyses pseudouridine(1915) in 23S rRNA + S-adenosyl-L-methionine = N(3)-methylpseudouridine(1915) in 23S rRNA + S-adenosyl-L-homocysteine + H(+). Its function is as follows. Specifically methylates the pseudouridine at position 1915 (m3Psi1915) in 23S rRNA. The sequence is that of Ribosomal RNA large subunit methyltransferase H from Fusobacterium nucleatum subsp. nucleatum (strain ATCC 25586 / DSM 15643 / BCRC 10681 / CIP 101130 / JCM 8532 / KCTC 2640 / LMG 13131 / VPI 4355).